The sequence spans 153 residues: Peptidoglycan-associated lipoprotein (153 aa).

Residues 1–19 form the signal peptide; sequence MNKFVKSLLVAGSVAALAA. Cys20 is lipidated: N-palmitoyl cysteine. The S-diacylglycerol cysteine moiety is linked to residue Cys20. Residues 40–153 form the OmpA-like domain; sequence SVADLQQRYN…SKNRRAVLAY (114 aa). Peptidoglycan binding regions lie at residues 55-56 and 97-101; these read FD and YNIAL.

This sequence belongs to the Pal lipoprotein family. As to quaternary structure, the Tol-Pal system is composed of five core proteins: the inner membrane proteins TolA, TolQ and TolR, the periplasmic protein TolB and the outer membrane protein Pal. They form a network linking the inner and outer membranes and the peptidoglycan layer.

The protein localises to the cell outer membrane. In terms of biological role, part of the Tol-Pal system, which plays a role in outer membrane invagination during cell division and is important for maintaining outer membrane integrity. The protein is Peptidoglycan-associated lipoprotein of Haemophilus influenzae (strain ATCC 51907 / DSM 11121 / KW20 / Rd).